We begin with the raw amino-acid sequence, 257 residues long: Imidazole glycerol phosphate synthase subunit HisF (257 aa).

Catalysis depends on residues aspartate 12 and aspartate 131.

The protein belongs to the HisA/HisF family. Heterodimer of HisH and HisF.

Its subcellular location is the cytoplasm. The enzyme catalyses 5-[(5-phospho-1-deoxy-D-ribulos-1-ylimino)methylamino]-1-(5-phospho-beta-D-ribosyl)imidazole-4-carboxamide + L-glutamine = D-erythro-1-(imidazol-4-yl)glycerol 3-phosphate + 5-amino-1-(5-phospho-beta-D-ribosyl)imidazole-4-carboxamide + L-glutamate + H(+). It functions in the pathway amino-acid biosynthesis; L-histidine biosynthesis; L-histidine from 5-phospho-alpha-D-ribose 1-diphosphate: step 5/9. In terms of biological role, IGPS catalyzes the conversion of PRFAR and glutamine to IGP, AICAR and glutamate. The HisF subunit catalyzes the cyclization activity that produces IGP and AICAR from PRFAR using the ammonia provided by the HisH subunit. The chain is Imidazole glycerol phosphate synthase subunit HisF from Paraburkholderia xenovorans (strain LB400).